The sequence spans 111 residues: Dormancy-associated protein 1 (111 aa).

The segment at 30–60 is disordered; sequence KDDGASNQLMRSTSIPTTPTTPVTPTTPSSA. The span at 41-59 shows a compositional bias: low complexity; the sequence is STSIPTTPTTPVTPTTPSS.

This sequence belongs to the DRM1/ARP family. As to expression, expressed in axilary buds and in non-growing stems and roots. Detected in sepals, stamens and carpels, but barely detected in petals or leaflets.

This is Dormancy-associated protein 1 from Pisum sativum (Garden pea).